The chain runs to 334 residues: Tryptophan--tRNA ligase (334 aa).

ATP is bound by residues Gln12–Ser14 and Gly20–Asn21. A 'HIGH' region motif is present at residues Pro13–Asn21. Asp136 contacts L-tryptophan. Residues Gly148–Asp150, Ile187, and Lys196–Ser200 each bind ATP. A 'KMSKS' region motif is present at residues Lys196–Ser200.

The protein belongs to the class-I aminoacyl-tRNA synthetase family. In terms of assembly, homodimer.

The protein resides in the cytoplasm. The enzyme catalyses tRNA(Trp) + L-tryptophan + ATP = L-tryptophyl-tRNA(Trp) + AMP + diphosphate + H(+). Functionally, catalyzes the attachment of tryptophan to tRNA(Trp). The protein is Tryptophan--tRNA ligase of Wigglesworthia glossinidia brevipalpis.